Consider the following 897-residue polypeptide: Transportin-2 (897 aa).

HEAT repeat units follow at residues 9–36 (GLQQVLQLLKDSQSPNTATQRIVQDKLK), 41–79 (FPDFNNYLIFVLTRLKSEDEPTRSLSGLILKNNVKAHYQ), 88–121 (FIKQECLNNIGDASSLIRATIGILITTIASKGEL), 127–164 (LLPQLCNLLNSEDYNTCEGAFGALQKICEDSSELLDSD), 171–201 (NIMIPKFLQFFKHCSPKIRSHAIACVNQFIM), 214–241 (FIEHLFALAVDDDPEVRKNVCRALVMLL), 253–280 (HSIIQYMLQRTQDHDENVALEACEFWLT), 296–386 (VQLI…LANV), 394–422 (HLLPLLKGLLFHPEWVVKESGILVLGAIA), 434–461 (PELIPHLIQCLSDKKALVRSIACWTLSR), 475–508 (LKPLMTELLKRILDGNKRVQEAACSAFATLEEEA), 516–549 (LSYILDTLVFAFGKYQHKNLLILYDAIGTLADSV), 557–595 (EYIQKLMPPLIQKWNELKDEDKDLFPLLECLSSVATALQ), 603–654 (EPVY…GLGG), 665–696 (IMTLLFQCMQDSMPEVRQSSFALLGDLTKACF), 704–737 (AEFMPILGTNLNPEFISVCNNATWAIGEICMQMG), 745–790 (QMVL…YVCP), 798–831 (QQFIRPWCTSLRNIRDNEEKDSAFRGICMMIGVN), 840–871 (IFFCDAVASWVSPKDDLRDMFYKILHGFKDQV), and 874–894 (DNWQQFSEQFPPLLKERLAAF). The region spanning 31 to 99 (VQDKLKQLNQ…KQECLNNIGD (69 aa)) is the Importin N-terminal domain. The tract at residues 325–364 (AVPDSEQDIKPRFHKSRTVTLPHEAERPDGSEDAEDDDDD) is disordered. Residues 355–364 (SEDAEDDDDD) show a composition bias toward acidic residues. Lys862 carries the post-translational modification N6-acetyllysine.

It belongs to the importin beta family. Importin beta-2 subfamily.

It is found in the cytoplasm. The protein resides in the nucleus. Its function is as follows. Probably functions in nuclear protein import as nuclear transport receptor. Serves as receptor for nuclear localization signals (NLS) in cargo substrates. Is thought to mediate docking of the importin/substrate complex to the nuclear pore complex (NPC) through binding to nucleoporin and the complex is subsequently translocated through the pore by an energy requiring, Ran-dependent mechanism. At the nucleoplasmic side of the NPC, Ran binds to the importin, the importin/substrate complex dissociates and importin is re-exported from the nucleus to the cytoplasm where GTP hydrolysis releases Ran. The directionality of nuclear import is thought to be conferred by an asymmetric distribution of the GTP- and GDP-bound forms of Ran between the cytoplasm and nucleus. This Homo sapiens (Human) protein is Transportin-2 (TNPO2).